Here is a 900-residue protein sequence, read N- to C-terminus: Phosphoenolpyruvate carboxylase (900 aa).

Residues H140 and K568 contribute to the active site.

The protein belongs to the PEPCase type 1 family. It depends on Mg(2+) as a cofactor.

The catalysed reaction is oxaloacetate + phosphate = phosphoenolpyruvate + hydrogencarbonate. Functionally, forms oxaloacetate, a four-carbon dicarboxylic acid source for the tricarboxylic acid cycle. In Neisseria meningitidis serogroup A / serotype 4A (strain DSM 15465 / Z2491), this protein is Phosphoenolpyruvate carboxylase.